The following is a 238-amino-acid chain: MDYQNQKSNENKHGEKLMMKNRSKFVGVRQRASGKWAAEIKDTSKNIRMWLGTYKTAEEAARAYDEAAFLLRGTNTRTNFSTTHSIPTNSPISLKLKNLLHRKSISNLSQSKNQCTLMSSSLQGAPIDNSIMVMENENKSSCSSEESKSLFWVQNQLVSEYNPYGVDMNMMNCSIGITPNTLQIDYSWPLPQQRINELPTLNDSVNVYGMNECYVEGTYESKYEYDVNYPLSHLFCFT.

A DNA-binding region (AP2/ERF) is located at residues 24 to 81; it reads KFVGVRQRASGKWAAEIKDTSKNIRMWLGTYKTAEEAARAYDEAAFLLRGTNTRTNFS.

Belongs to the AP2/ERF transcription factor family. ERF subfamily. Expressed in roots, root hairs and leaves.

It is found in the nucleus. Functionally, transcription factor involved in symbiotic nodule signaling in response to rhizobial Nod factors (NFs). Binds to the GCC box (NF-responsive box) of ENOD11 promoter. May act as transcriptional repressor of NF-responsive box-containing target gene promoters in root hairs. The polypeptide is Ethylene-responsive transcription factor ERN3 (Medicago truncatula (Barrel medic)).